The following is a 119-amino-acid chain: uncharacterized protein (119 aa).

To T.pallidum TP_0127, TP_0315 and TP_0619.

This is an uncharacterized protein from Treponema pallidum (strain Nichols).